A 586-amino-acid polypeptide reads, in one-letter code: Proton channel OTOP1 (586 aa).

The Cytoplasmic portion of the chain corresponds to 1–52; that stretch reads MVEHGGTDSMWLNKYNPAAASSASSSSSSDAENKLFSRLKVSLTKKYPQKNA. A helical membrane pass occupies residues 53-74; that stretch reads ELLSAQYGTNLLLLGVSVMLAL. Residues 75–82 lie on the Extracellular side of the membrane; that stretch reads AAQSGPVK. Residues 83 to 106 form a helical membrane-spanning segment; it reads EEHLLSFITVLMLVQLVWMLCYMI. Residues 107–124 lie on the Cytoplasmic side of the membrane; the sequence is RRERERSPVPERDAHAGA. Residues 125-147 form a helical membrane-spanning segment; that stretch reads SWIRGGLTMLALLSLIMDAFRIG. The Extracellular segment spans residues 148 to 157; that stretch reads YFVGYHSCIS. Residues 158–182 traverse the membrane as a helical segment; that stretch reads AALGVYPIVHALHTISQVHFLWFHI. The Cytoplasmic portion of the chain corresponds to 183–190; the sequence is KDVIKKYE. A helical transmembrane segment spans residues 191 to 217; sequence TFERFGVIHAVFTNLLLWCNGVMSETE. The Extracellular segment spans residues 218 to 255; sequence HFMHNHRRRLIEMGYANLSTVDVQPHCNCTTSVCSMFS. Residues 256 to 281 traverse the membrane as a helical segment; the sequence is TSLYYLYPFNIEYHIFVSAMLFVMWK. Topologically, residues 282 to 303 are cytoplasmic; the sequence is NIGRTLDRHSNRKRRSTGSTGL. Residues 304-326 traverse the membrane as a helical segment; sequence LLGPLGGLVALASSVSVLVVYLI. The Extracellular segment spans residues 327–336; that stretch reads HLEKTEEMHE. A helical transmembrane segment spans residues 337-362; sequence AAVSMFYYYGVAMMACMCVGSGTGLL. Over 363 to 380 the chain is Cytoplasmic; it reads VYRMENRPMDTGSNPART. A helical transmembrane segment spans residues 381–405; the sequence is LDTELLLASSLGSWLMSWCSVVASV. At 406–417 the chain is on the extracellular side; sequence AEAGQKSPSFSW. The chain crosses the membrane as a helical span at residues 418 to 438; the sequence is TSLTYSLLLVLEKCIQNLFIV. Residues 439–518 lie on the Cytoplasmic side of the membrane; that stretch reads ESLYRRHSEE…TPGRKRQILK (80 aa). Residues 484–505 form a disordered region; sequence PAAGSHALSRKQPDAPLPAGQR. The chain crosses the membrane as a helical span at residues 519 to 537; the sequence is NICMFLFMCNISLWILPAF. The Extracellular segment spans residues 538-555; that stretch reads GCRPQYDNPLENETFGTS. Residues 556-579 traverse the membrane as a helical segment; the sequence is VWTTVLNVAIPLNLFYRMHSVASL. At 580–586 the chain is on the cytoplasmic side; sequence FEVFRKV.

Belongs to the otopetrin family. In terms of assembly, homodimer.

Its subcellular location is the cell membrane. The protein localises to the cell projection. It localises to the microvillus. The enzyme catalyses H(+)(in) = H(+)(out). Its activity is regulated as follows. Activated by both acid and alkali, with proton influx in response to extracellular acid and proton efflux during alkali stimulation. Inhibited by Zn(2+); this inhibition is thought to be pH-sensitive. Currents evoked in response to mild acid (pH 6.0) stimulus may also be mildly potentiated by exposure to Zn(2+). Activated by NH(4)Cl. Proton-selective ion channel. Biphasically modulated by acid and alkali, mediating proton influx and efflux in response to extracellular acid and base stimulation, respectively. May be involved in acid and base perception. Sensor for ammonium chloride (NH(4)Cl) in taste receptor cells. NH(4)Cl acts by increasing the intracellular pH, thereby generating a driving force for proton entry through OTOP1 channel. Plays a role in the regulation of Ca(2+) flux in response to purigenic (ATP, ADP and UDP) stimuli, leading to increase in cytosolic Ca(2+) due to influx of extracellular calcium. May play this role by inhibiting P2Y purinoceptor-mediated Ca(2+) release in a Ca(2+)-dependent manner and promote an influx of Ca(2+) in response to ATP. Through this mechanism and possibly others, plays a role in the formation and function of calcium carbonate-based structures in the vestibular system of the inner ear, called otoconia, that sense gravity and linear acceleration. In Danio rerio (Zebrafish), this protein is Proton channel OTOP1.